A 234-amino-acid chain; its full sequence is tRNA (guanine-N(1)-)-methyltransferase (234 aa).

S-adenosyl-L-methionine-binding positions include Gly115 and 135–140; that span reads VGDYIL.

The protein belongs to the RNA methyltransferase TrmD family. As to quaternary structure, homodimer.

The protein localises to the cytoplasm. The catalysed reaction is guanosine(37) in tRNA + S-adenosyl-L-methionine = N(1)-methylguanosine(37) in tRNA + S-adenosyl-L-homocysteine + H(+). Functionally, specifically methylates guanosine-37 in various tRNAs. This chain is tRNA (guanine-N(1)-)-methyltransferase, found in Rickettsia africae (strain ESF-5).